Reading from the N-terminus, the 317-residue chain is Malate dehydrogenase (317 aa).

NAD(+)-binding positions include 15–20 and D39; that span reads GSGNIG. Residues R88 and R94 each contribute to the substrate site. Residues N101 and 124-126 each bind NAD(+); that span reads VTN. Positions 126 and 157 each coordinate substrate. H181 serves as the catalytic Proton acceptor.

The protein belongs to the LDH/MDH superfamily. MDH type 3 family.

It catalyses the reaction (S)-malate + NAD(+) = oxaloacetate + NADH + H(+). In terms of biological role, catalyzes the reversible oxidation of malate to oxaloacetate. This is Malate dehydrogenase from Ehrlichia ruminantium (strain Gardel).